The primary structure comprises 185 residues: MPCNRAVFGAFVLALLISLQSVYFKLYEFYKNNETARNTSVAGFLKRHEVAVNVIVEFSFDILFFLCGLLGFELSPTARRLIFRRTASAEKADTVELEHVSSRRRNDSRDDSTVRNVSKTSPLASQRSRDHFDGDPREPAPPAYSPADFYPPPASPHICETPLSTRVAPSAPSASLFTAGGIGLP.

The N-terminal stretch at 1–24 (MPCNRAVFGAFVLALLISLQSVYF) is a signal peptide. Residues 50–70 (VAVNVIVEFSFDILFFLCGLL) traverse the membrane as a helical segment. Residues 96–113 (ELEHVSSRRRNDSRDDST) are compositionally biased toward basic and acidic residues. A disordered region spans residues 96 to 185 (ELEHVSSRRR…LFTAGGIGLP (90 aa)). Positions 114–126 (VRNVSKTSPLASQ) are enriched in polar residues. Basic and acidic residues predominate over residues 127–138 (RSRDHFDGDPRE). The segment covering 139-155 (PAPPAYSPADFYPPPAS) has biased composition (pro residues).

Its subcellular location is the host membrane. This is an uncharacterized protein from Colorado tick fever virus (strain USA/Florio N-7180) (CTFV).